Consider the following 182-residue polypeptide: Probable peptidyl-prolyl cis-trans isomerase A (182 aa).

Positions 13-181 (ATATATLHTN…DPVVIESITI (169 aa)) constitute a PPIase cyclophilin-type domain.

The protein belongs to the cyclophilin-type PPIase family.

It is found in the cytoplasm. The catalysed reaction is [protein]-peptidylproline (omega=180) = [protein]-peptidylproline (omega=0). Functionally, PPIases accelerate the folding of proteins. It catalyzes the cis-trans isomerization of proline imidic peptide bonds in oligopeptides. This chain is Probable peptidyl-prolyl cis-trans isomerase A (ppiA), found in Mycobacterium bovis (strain ATCC BAA-935 / AF2122/97).